We begin with the raw amino-acid sequence, 603 residues long: Terpenoid synthase 25 (603 aa).

Aspartate 356, aspartate 360, asparagine 500, threonine 504, and glutamate 508 together coordinate Mg(2+). Residues 356–360 carry the DDXXD motif motif; that stretch reads DDTCD.

It belongs to the terpene synthase family. Tpsa subfamily. It depends on Mg(2+) as a cofactor. Mn(2+) serves as cofactor. As to expression, predominantly expressed in roots but also in flowers.

It localises to the cytoplasm. It functions in the pathway secondary metabolite biosynthesis; terpenoid biosynthesis. Its function is as follows. Involved in terpene biosynthesis in roots. Possesses sesquiterpene (C15) synthase activity in vitro. Does not seem to be involved in diterpene (C20) biosynthesis. In Arabidopsis thaliana (Mouse-ear cress), this protein is Terpenoid synthase 25.